A 243-amino-acid polypeptide reads, in one-letter code: Leucinostatins biosynthesis cluster protein S (243 aa).

In terms of biological role, part of the gene cluster that mediates the biosynthesis of the lipopeptide antibiotics leucinostatins that show extensive biological activities, including antimalarial, antiviral, antibacterial, antifungal, and antitumor activities, as well as phytotoxic. The function of lcsS within the leucinostatins biosynthesis has not been identified yet. This Purpureocillium lilacinum (Paecilomyces lilacinus) protein is Leucinostatins biosynthesis cluster protein S.